The following is a 225-amino-acid chain: Orotate phosphoribosyltransferase (225 aa).

Residue Lys29 coordinates 5-phospho-alpha-D-ribose 1-diphosphate. 37 to 38 (FF) is an orotate binding site. Residues 75-76 (YK), Arg105, Lys106, Lys109, His111, and 130-138 (DDVITAGTS) contribute to the 5-phospho-alpha-D-ribose 1-diphosphate site. Orotate contacts are provided by Thr134 and Arg162.

Belongs to the purine/pyrimidine phosphoribosyltransferase family. PyrE subfamily. In terms of assembly, homodimer. Mg(2+) is required as a cofactor.

It carries out the reaction orotidine 5'-phosphate + diphosphate = orotate + 5-phospho-alpha-D-ribose 1-diphosphate. It participates in pyrimidine metabolism; UMP biosynthesis via de novo pathway; UMP from orotate: step 1/2. Catalyzes the transfer of a ribosyl phosphate group from 5-phosphoribose 1-diphosphate to orotate, leading to the formation of orotidine monophosphate (OMP). This chain is Orotate phosphoribosyltransferase, found in Bordetella petrii (strain ATCC BAA-461 / DSM 12804 / CCUG 43448).